The following is a 311-amino-acid chain: 4-hydroxyproline 2-epimerase (311 aa).

Cys88 (proton acceptor) is an active-site residue. Substrate contacts are provided by residues 89–90 (GH), His208, and Asp232. Residue Cys236 is the Proton donor of the active site. Residue 237-238 (GT) participates in substrate binding.

It belongs to the proline racemase family.

It carries out the reaction trans-4-hydroxy-L-proline = cis-4-hydroxy-D-proline. Its function is as follows. Catalyzes the epimerization of trans-4-hydroxy-L-proline (t4LHyp) to cis-4-hydroxy-D-proline (c4DHyp). Is likely involved in a degradation pathway that converts t4LHyp to alpha-ketoglutarate. Displays no proline racemase activity. In Chromohalobacter salexigens (strain ATCC BAA-138 / DSM 3043 / CIP 106854 / NCIMB 13768 / 1H11), this protein is 4-hydroxyproline 2-epimerase.